The following is a 434-amino-acid chain: UDP-N-acetylenolpyruvoylglucosamine reductase (434 aa).

The 188-residue stretch at 51–238 (IGAAPAGVVE…TAVEFQLTTD (188 aa)) folds into the FAD-binding PCMH-type domain. Residue arginine 216 is part of the active site. Catalysis depends on serine 299, which acts as the Proton donor. Glutamate 425 is an active-site residue.

It belongs to the MurB family. Requires FAD as cofactor.

It localises to the cytoplasm. It carries out the reaction UDP-N-acetyl-alpha-D-muramate + NADP(+) = UDP-N-acetyl-3-O-(1-carboxyvinyl)-alpha-D-glucosamine + NADPH + H(+). Its pathway is cell wall biogenesis; peptidoglycan biosynthesis. Functionally, cell wall formation. The sequence is that of UDP-N-acetylenolpyruvoylglucosamine reductase from Corynebacterium jeikeium (strain K411).